The chain runs to 123 residues: Large ribosomal subunit protein bL17 (123 aa).

It belongs to the bacterial ribosomal protein bL17 family. As to quaternary structure, part of the 50S ribosomal subunit. Contacts protein L32.

The chain is Large ribosomal subunit protein bL17 from Dichelobacter nodosus (strain VCS1703A).